The primary structure comprises 394 residues: 12-oxophytodienoate reductase 7 (394 aa).

Residues 35–37 and Gln110 contribute to the FMN site; that span reads PMT. 189-192 is a substrate binding site; it reads HGAH. The active-site Proton donor is the Tyr194. FMN is bound at residue Arg241. Arg286 lines the substrate pocket. Residues Gly324 and 345–346 each bind FMN; that span reads GR. Residues 392–394 carry the Microbody targeting signal motif; the sequence is SRM.

The protein belongs to the NADH:flavin oxidoreductase/NADH oxidase family. Requires FMN as cofactor.

It localises to the peroxisome. It catalyses the reaction (1S,2S)-OPC-8 + NADP(+) = (9S,13S,15Z)-12-oxophyto-10,15-dienoate + NADPH + H(+). Its pathway is lipid metabolism; oxylipin biosynthesis. Its function is as follows. Involved in the biosynthesis of jasmonate (JA) and perhaps in biosynthesis or metabolism of other oxylipin signaling moleclules. In vitro, reduces cis(+)-12-oxophytodienoic acid (cis(+)-OPDA) and cis(-)-OPDA to cis(+)-OPC-8:0 and cis(-)-OPC-8:0, respectively. May be required for the spatial and temporal regulation of JA levels during dehiscence of anthers, promoting the stomium degeneration program. Involved in carbohydrate transport underlying normal lodicule function during anthesis. The polypeptide is 12-oxophytodienoate reductase 7 (Oryza sativa subsp. japonica (Rice)).